A 762-amino-acid chain; its full sequence is FAST kinase domain-containing protein 5, mitochondrial (762 aa).

S95 bears the Phosphoserine mark. K506 carries the post-translational modification N6-acetyllysine. In terms of domain architecture, RAP spans 695–755; that stretch reads LAIQFTNKNQ…RLEKLAYLHE (61 aa).

Belongs to the FAST kinase family. As to quaternary structure, found in a complex with GRSF1, DDX28, DHX30 and FASTKD2. Associates with the 12S mitochondrial rRNA (12S mt-rRNA). As to expression, expression detected in spleen, testis, colon, heart, smooth muscle, kidney, brain, lung, liver, brown and white adipose tissue.

It is found in the mitochondrion matrix. It localises to the mitochondrion nucleoid. Its function is as follows. Plays an important role in the processing of non-canonical mitochondrial mRNA precursors. This Mus musculus (Mouse) protein is FAST kinase domain-containing protein 5, mitochondrial (Fastkd5).